Reading from the N-terminus, the 122-residue chain is Crustacean hyperglycemic hormones 7 (122 aa).

A signal peptide spans 1–26 (MSLAMTAFRMMAVALVVVVASSTTWA). Intrachain disulfides connect Cys-55-Cys-91, Cys-71-Cys-87, and Cys-74-Cys-100. Val-120 carries the post-translational modification Valine amide.

This sequence belongs to the arthropod CHH/MIH/GIH/VIH hormone family. In terms of tissue distribution, produced by the medulla terminalis X-organ in the eyestalks and transported to the sinus gland where they are stored and released.

The protein resides in the secreted. Functionally, hormone found in the sinus gland of isopods and decapods which controls the blood sugar level. Has a secretagogue action over the amylase released from the midgut gland. May act as a stress hormone and may be involved in the control of molting and reproduction. In Penaeus japonicus (Kuruma prawn), this protein is Crustacean hyperglycemic hormones 7.